The primary structure comprises 753 residues: MSGSYTPSPGGPFSALTASMWPQDILAKYTQKEQTVEQPEFRYDEFGFRVDKEDGAEPNSSKLLGIPLTEDPQQRLRWQAHLEFTHNHDVGDLTWDKIDVTLPHSDKLRSLVLAGIPHSMRPQLWMRLSGALQKKQNSEMTYKDIGRNSSNDDTLAAKQIEKDLLRTMPSNACFSNLQSVGVPRLRRVLRGLAWLFPDIGYCQGTGMVAACLLLFLEEEDAFWMMATIVEDLVPVSYFNTTLVGVQTDQRVLRHLIVQYLPRLDKLLQEHDIELSLITLHWFLTAFASVVHIKLLLRIWDFFFYQGSLVLFQTTLGMLKMKEEELIQSENSASIFNTLSDIPSQIEEADVLLREAMLISGTLTEVMIEAQRRKHLAYLIADQGQLLNSTAAVANLSKIMRRQSQRRKSAITTLLFGDDNFEALKSKNIKQTALVADLREAILQVARHFQYTDPKNCSIDLTPDYTMESHQRDHENYVSCSQSRRRRAKALLDFERHDDDELGFRKNDIITIISQKDEHCWVGELNGLRGWFPAKFVDILDERSKEYSVAGDDSVTEGITDLIRGTLSPSIKSIFEHGLKKPSLLGGPCHPWLFIEEAASREVERDFDSVYSRLVLCKTYRLDEDGKVLTPEELLYRGVQSVNVSHDAAHAQMDVKLRSLISIGLNEQVLHLWLEVLCSSLPTVEKWYQPWSFLRSPGWVQIKCELRVLSKFAFSLSPDWELPVKREDKEKKPLKEGVQDMLVKHHLFSWDIDG.

The region spanning G115 to G306 is the Rab-GAP TBC domain. The 60-residue stretch at S482 to E541 folds into the SH3 domain. The RUN domain maps to G557–E720.

Belongs to the small G protein signaling modulator family.

The polypeptide is Small G protein signaling modulator 3 homolog (sgsm3) (Xenopus laevis (African clawed frog)).